Here is a 167-residue protein sequence, read N- to C-terminus: Crossover junction endodeoxyribonuclease RuvC (167 aa).

Catalysis depends on residues Asp-11, Glu-71, and Asp-143. Positions 11, 71, and 143 each coordinate Mg(2+).

This sequence belongs to the RuvC family. Homodimer which binds Holliday junction (HJ) DNA. The HJ becomes 2-fold symmetrical on binding to RuvC with unstacked arms; it has a different conformation from HJ DNA in complex with RuvA. In the full resolvosome a probable DNA-RuvA(4)-RuvB(12)-RuvC(2) complex forms which resolves the HJ. Requires Mg(2+) as cofactor.

It localises to the cytoplasm. It carries out the reaction Endonucleolytic cleavage at a junction such as a reciprocal single-stranded crossover between two homologous DNA duplexes (Holliday junction).. The RuvA-RuvB-RuvC complex processes Holliday junction (HJ) DNA during genetic recombination and DNA repair. Endonuclease that resolves HJ intermediates. Cleaves cruciform DNA by making single-stranded nicks across the HJ at symmetrical positions within the homologous arms, yielding a 5'-phosphate and a 3'-hydroxyl group; requires a central core of homology in the junction. The consensus cleavage sequence is 5'-(A/T)TT(C/G)-3'. Cleavage occurs on the 3'-side of the TT dinucleotide at the point of strand exchange. HJ branch migration catalyzed by RuvA-RuvB allows RuvC to scan DNA until it finds its consensus sequence, where it cleaves and resolves the cruciform DNA. In Acidiphilium cryptum (strain JF-5), this protein is Crossover junction endodeoxyribonuclease RuvC.